Consider the following 117-residue polypeptide: uncharacterized protein (117 aa).

This is an uncharacterized protein from Sinorhizobium fredii (strain NBRC 101917 / NGR234).